Consider the following 162-residue polypeptide: ATP synthase subunit b', chloroplastic (162 aa).

A helical transmembrane segment spans residues 26–46; that stretch reads ATLPLQALQFILLTVLLTFIF.

Belongs to the ATPase B chain family. In terms of assembly, F-type ATPases have 2 components, F(1) - the catalytic core - and F(0) - the membrane proton channel. F(1) has five subunits: alpha(3), beta(3), gamma(1), delta(1), epsilon(1). F(0) has four main subunits: a(1), b(1), b'(1) and c(10-14). The alpha and beta chains form an alternating ring which encloses part of the gamma chain. F(1) is attached to F(0) by a central stalk formed by the gamma and epsilon chains, while a peripheral stalk is formed by the delta, b and b' chains.

The protein resides in the plastid. The protein localises to the chloroplast thylakoid membrane. F(1)F(0) ATP synthase produces ATP from ADP in the presence of a proton or sodium gradient. F-type ATPases consist of two structural domains, F(1) containing the extramembraneous catalytic core and F(0) containing the membrane proton channel, linked together by a central stalk and a peripheral stalk. During catalysis, ATP synthesis in the catalytic domain of F(1) is coupled via a rotary mechanism of the central stalk subunits to proton translocation. Functionally, component of the F(0) channel, it forms part of the peripheral stalk, linking F(1) to F(0). The b'-subunit is a diverged and duplicated form of b found in plants and photosynthetic bacteria. This chain is ATP synthase subunit b', chloroplastic, found in Emiliania huxleyi (Coccolithophore).